A 1528-amino-acid polypeptide reads, in one-letter code: Intraflagellar transport protein 121 (1528 aa).

WD repeat units follow at residues 123–170 (SNRA…GSAP), 244–285 (SSMP…SSVS), 619–667 (PSLT…SEFL), and 759–798 (PELI…REDS). The segment at 914–933 (DSGLDVTASNSSQPSTQTSQ) is disordered. The segment covering 920–933 (TASNSSQPSTQTSQ) has biased composition (low complexity).

The protein resides in the cell projection. It is found in the cilium. Its subcellular location is the flagellum. It localises to the cytoplasm. The protein localises to the cytoskeleton. The protein resides in the flagellum axoneme. It is found in the flagellum basal body. In terms of biological role, component of the intraflagellar transport complex A (IFT-A) involved in flagellar assembly. This chain is Intraflagellar transport protein 121, found in Giardia intestinalis (strain ATCC 50803 / WB clone C6) (Giardia lamblia).